A 497-amino-acid chain; its full sequence is Aspartyl/glutamyl-tRNA(Asn/Gln) amidotransferase subunit B (497 aa).

It belongs to the GatB/GatE family. GatB subfamily. In terms of assembly, heterotrimer of A, B and C subunits.

It catalyses the reaction L-glutamyl-tRNA(Gln) + L-glutamine + ATP + H2O = L-glutaminyl-tRNA(Gln) + L-glutamate + ADP + phosphate + H(+). It carries out the reaction L-aspartyl-tRNA(Asn) + L-glutamine + ATP + H2O = L-asparaginyl-tRNA(Asn) + L-glutamate + ADP + phosphate + 2 H(+). Functionally, allows the formation of correctly charged Asn-tRNA(Asn) or Gln-tRNA(Gln) through the transamidation of misacylated Asp-tRNA(Asn) or Glu-tRNA(Gln) in organisms which lack either or both of asparaginyl-tRNA or glutaminyl-tRNA synthetases. The reaction takes place in the presence of glutamine and ATP through an activated phospho-Asp-tRNA(Asn) or phospho-Glu-tRNA(Gln). The protein is Aspartyl/glutamyl-tRNA(Asn/Gln) amidotransferase subunit B of Novosphingobium aromaticivorans (strain ATCC 700278 / DSM 12444 / CCUG 56034 / CIP 105152 / NBRC 16084 / F199).